The primary structure comprises 879 residues: Alanine--tRNA ligase (879 aa).

Zn(2+)-binding residues include His-566, His-570, Cys-668, and His-672.

Belongs to the class-II aminoacyl-tRNA synthetase family. It depends on Zn(2+) as a cofactor.

Its subcellular location is the cytoplasm. It carries out the reaction tRNA(Ala) + L-alanine + ATP = L-alanyl-tRNA(Ala) + AMP + diphosphate. In terms of biological role, catalyzes the attachment of alanine to tRNA(Ala) in a two-step reaction: alanine is first activated by ATP to form Ala-AMP and then transferred to the acceptor end of tRNA(Ala). Also edits incorrectly charged Ser-tRNA(Ala) and Gly-tRNA(Ala) via its editing domain. In Clostridium botulinum (strain Loch Maree / Type A3), this protein is Alanine--tRNA ligase.